The following is a 346-amino-acid chain: Peroxidase 9 (346 aa).

Residues Met-1 to Ala-23 form the signal peptide. 4 cysteine pairs are disulfide-bonded: Cys-54–Cys-134, Cys-87–Cys-92, Cys-140–Cys-342, and Cys-219–Cys-251. His-85 serves as the catalytic Proton acceptor. Ca(2+) is bound by residues Asp-86, Val-89, Gly-91, Asp-93, and Ser-95. Pro-182 provides a ligand contact to substrate. An N-linked (GlcNAc...) asparagine glycan is attached at Asn-185. Heme b is bound at residue His-212. Thr-213 is a binding site for Ca(2+). Ca(2+) is bound by residues Asp-264, Ser-267, and Asp-272.

This sequence belongs to the peroxidase family. Classical plant (class III) peroxidase subfamily. The cofactor is heme b. Ca(2+) is required as a cofactor.

It is found in the secreted. The catalysed reaction is 2 a phenolic donor + H2O2 = 2 a phenolic radical donor + 2 H2O. Functionally, removal of H(2)O(2), oxidation of toxic reductants, biosynthesis and degradation of lignin, suberization, auxin catabolism, response to environmental stresses such as wounding, pathogen attack and oxidative stress. These functions might be dependent on each isozyme/isoform in each plant tissue. The protein is Peroxidase 9 (PER9) of Arabidopsis thaliana (Mouse-ear cress).